A 568-amino-acid chain; its full sequence is Mannitol 2-dehydrogenase (568 aa).

An NAD(+)-binding site is contributed by 109–120; sequence IVHVGVGGFHRA.

The protein belongs to the mannitol dehydrogenase family. In terms of assembly, monomer.

The catalysed reaction is D-mannitol + NAD(+) = D-fructose + NADH + H(+). Its function is as follows. Catalyzes the NAD(H)-dependent interconversion of D-fructose and D-mannitol in the mannitol metabolic pathway. The protein is Mannitol 2-dehydrogenase of Phaeosphaeria nodorum (strain SN15 / ATCC MYA-4574 / FGSC 10173) (Glume blotch fungus).